The sequence spans 465 residues: Ribulose bisphosphate carboxylase large chain (465 aa).

The residue at position 4 (K4) is an N6,N6,N6-trimethyllysine. Positions 113 and 163 each coordinate substrate. The active-site Proton acceptor is the K165. K167 contributes to the substrate binding site. Mg(2+) contacts are provided by K191, D193, and E194. N6-carboxylysine is present on K191. The Proton acceptor role is filled by H284. Substrate-binding residues include R285, H317, and S369.

The protein belongs to the RuBisCO large chain family. Type I subfamily. As to quaternary structure, heterohexadecamer of 8 large chains and 8 small chains; disulfide-linked. The disulfide link is formed within the large subunit homodimers. Requires Mg(2+) as cofactor. In terms of processing, the disulfide bond which can form in the large chain dimeric partners within the hexadecamer appears to be associated with oxidative stress and protein turnover.

Its subcellular location is the plastid. The protein resides in the chloroplast. The enzyme catalyses 2 (2R)-3-phosphoglycerate + 2 H(+) = D-ribulose 1,5-bisphosphate + CO2 + H2O. It catalyses the reaction D-ribulose 1,5-bisphosphate + O2 = 2-phosphoglycolate + (2R)-3-phosphoglycerate + 2 H(+). In terms of biological role, ruBisCO catalyzes two reactions: the carboxylation of D-ribulose 1,5-bisphosphate, the primary event in carbon dioxide fixation, as well as the oxidative fragmentation of the pentose substrate in the photorespiration process. Both reactions occur simultaneously and in competition at the same active site. This is Ribulose bisphosphate carboxylase large chain from Fragaria ananassa (Strawberry).